A 160-amino-acid polypeptide reads, in one-letter code: Calcium and integrin-binding family member 3 (160 aa).

3 EF-hand domains span residues 39 to 74 (KDNP…MSEM), 76 to 111 (PRDL…LTRG), and 117 to 152 (EVTL…APDF). Residues D89, N91, D93, Y95, D100, D130, D132, D134, R136, and D141 each contribute to the Ca(2+) site.

Monomer and homodimer. Interacts with ITGA2B (via C-terminus cytoplasmic tail region); the interaction is stabilized/increased in a calcium and magnesium-dependent manner. Interacts with TMC1. In terms of tissue distribution, expressed in heart, liver and inner ear. In the inner ear, expressed in vestibule and basilar membrane cells. Expressed in megakaryocytes and endothelial cells.

Acts as an auxiliary subunit of the sensory mechanoelectrical transduction (MET) channel in hair cells. Plays a role in regulating hair cell MET channel localization and function. This Mus musculus (Mouse) protein is Calcium and integrin-binding family member 3 (Cib3).